The primary structure comprises 332 residues: tRNA-dihydrouridine synthase B (332 aa).

FMN-binding positions include 16–18 (PMA) and Gln70. Cys100 functions as the Proton donor in the catalytic mechanism. FMN contacts are provided by residues Lys139, 200–202 (NGD), and 224–225 (GR).

It belongs to the Dus family. DusB subfamily. FMN serves as cofactor.

It catalyses the reaction a 5,6-dihydrouridine in tRNA + NAD(+) = a uridine in tRNA + NADH + H(+). The catalysed reaction is a 5,6-dihydrouridine in tRNA + NADP(+) = a uridine in tRNA + NADPH + H(+). Functionally, catalyzes the synthesis of 5,6-dihydrouridine (D), a modified base found in the D-loop of most tRNAs, via the reduction of the C5-C6 double bond in target uridines. In Pasteurella multocida (strain Pm70), this protein is tRNA-dihydrouridine synthase B.